Consider the following 342-residue polypeptide: S-adenosylmethionine:tRNA ribosyltransferase-isomerase (342 aa).

The protein belongs to the QueA family. As to quaternary structure, monomer.

The protein localises to the cytoplasm. It catalyses the reaction 7-aminomethyl-7-carbaguanosine(34) in tRNA + S-adenosyl-L-methionine = epoxyqueuosine(34) in tRNA + adenine + L-methionine + 2 H(+). The protein operates within tRNA modification; tRNA-queuosine biosynthesis. Transfers and isomerizes the ribose moiety from AdoMet to the 7-aminomethyl group of 7-deazaguanine (preQ1-tRNA) to give epoxyqueuosine (oQ-tRNA). In Listeria monocytogenes serotype 4b (strain CLIP80459), this protein is S-adenosylmethionine:tRNA ribosyltransferase-isomerase.